The chain runs to 292 residues: Malectin (292 aa).

An N-terminal signal peptide occupies residues 1–28 (MLGAWAVEGTAVALLRLLLLLLPPAIRG). The Lumenal portion of the chain corresponds to 29–269 (PGLGVAGVAG…TPNPYASDNS (241 aa)). The a carbohydrate site is built by Y82, Y104, Y131, F132, and D201. Residues 221 to 265 (LQPHPGLEKKEEEEEEEEYDEGSNLKKQTNKNRVQSGPRTPNPYA) form a disordered region. Positions 231 to 241 (EEEEEEEEYDE) are enriched in acidic residues. Polar residues predominate over residues 245–265 (LKKQTNKNRVQSGPRTPNPYA). The N-linked (GlcNAc...) asparagine glycan is linked to N268. A helical membrane pass occupies residues 270-290 (SLMFPILVAFGVFIPTLFCLC). Over 291 to 292 (RL) the chain is Cytoplasmic.

It belongs to the malectin family. In terms of assembly, interacts with the oligosaccharyltransferase (OST) complex.

It localises to the endoplasmic reticulum membrane. In terms of biological role, carbohydrate-binding protein with a strong ligand preference for Glc2-N-glycan. May play a role in the early steps of protein N-glycosylation. The polypeptide is Malectin (Homo sapiens (Human)).